Here is a 338-residue protein sequence, read N- to C-terminus: Tryptophan--tRNA ligase (338 aa).

ATP is bound by residues 11-13 and 19-20; these read QPS and GN. The 'HIGH' region signature appears at 12-20; it reads PSGELSIGN. D135 serves as a coordination point for L-tryptophan. Residues 147-149, V189, and 198-202 contribute to the ATP site; these read GSD and KMSKS. The 'KMSKS' region motif lies at 198–202; that stretch reads KMSKS.

This sequence belongs to the class-I aminoacyl-tRNA synthetase family. Homodimer.

The protein resides in the cytoplasm. The enzyme catalyses tRNA(Trp) + L-tryptophan + ATP = L-tryptophyl-tRNA(Trp) + AMP + diphosphate + H(+). In terms of biological role, catalyzes the attachment of tryptophan to tRNA(Trp). This Vibrio parahaemolyticus serotype O3:K6 (strain RIMD 2210633) protein is Tryptophan--tRNA ligase.